Here is a 311-residue protein sequence, read N- to C-terminus: Meteorin-like protein (311 aa).

Residues 1–13 show a composition bias toward low complexity; sequence MRGAARAAWGRAG. The interval 1 to 24 is disordered; the sequence is MRGAARAAWGRAGQPWPRPPAPGP. The N-terminal stretch at 1 to 45 is a signal peptide; the sequence is MRGAARAAWGRAGQPWPRPPAPGPPPPPLPLLLLLLAGLLGGAGA. Cystine bridges form between C52–C75, C107–C143, C188–C260, C191–C284, and C201–C306.

This sequence belongs to the meteorin family. As to expression, highly expressed in the skeletal muscle, in subcutaneous adipose tissue, epididymal white adipose tissue depots and heart. Also expressed in brown adipose tissues and kidney.

It is found in the secreted. Its function is as follows. Hormone induced following exercise or cold exposure that promotes energy expenditure. Induced either in the skeletal muscle after exercise or in adipose tissue following cold exposure and is present in the circulation. Able to stimulate energy expenditure associated with the browning of the white fat depots and improves glucose tolerance. Does not promote an increase in a thermogenic gene program via direct action on adipocytes, but acts by stimulating several immune cell subtypes to enter the adipose tissue and activate their prothermogenic actions. Stimulates an eosinophil-dependent increase in IL4 expression and promotes alternative activation of adipose tissue macrophages, which are required for the increased expression of the thermogenic and anti-inflammatory gene programs in fat. Required for some cold-induced thermogenic responses, suggesting a role in metabolic adaptations to cold temperatures. This chain is Meteorin-like protein (METRNL), found in Homo sapiens (Human).